The following is a 128-amino-acid chain: LIM domain-containing protein 2 (128 aa).

Residue M1 is modified to N-acetylmethionine. Residues 1–25 (MFQAAGAAQATPSHEAKGSSGNSTV) form a disordered region. In terms of domain architecture, LIM zinc-binding spans 39–99 (ETCAACQKTV…KPHFQQLFKS (61 aa)). Residues C41, C44, H62, C65, C68, C71, C89, and H92 each coordinate Zn(2+).

In terms of assembly, interacts with ILK.

The protein resides in the cytoplasm. It is found in the nucleus. Functionally, acts as an activator of the protein-kinase ILK, thereby regulating cell motility. The polypeptide is LIM domain-containing protein 2 (Limd2) (Rattus norvegicus (Rat)).